The following is a 241-amino-acid chain: uncharacterized protein (241 aa).

This is an uncharacterized protein from Pasteurella multocida (strain Pm70).